A 360-amino-acid chain; its full sequence is Protein phosphatase 1L (360 aa).

The Extracellular segment spans residues 1–25 (MIEDTMTLLSLLGRIMRYFLLRPET). The chain crosses the membrane as a helical span at residues 26 to 42 (LFLLCISLALWSYFFHT). Topologically, residues 43-360 (DEVKTIVKSS…FRNSSKTEEQ (318 aa)) are cytoplasmic. The PPM-type phosphatase domain occupies 92 to 351 (NVAVYSIQGR…DNITVMVVKF (260 aa)). The Mn(2+) site is built by Asp128, Gly129, Asp302, and Asp342.

The protein belongs to the PP2C family. As to quaternary structure, interacts with MAP3K7/TAK1 and MAP3K5. It depends on Mg(2+) as a cofactor. Requires Mn(2+) as cofactor.

Its subcellular location is the membrane. The enzyme catalyses O-phospho-L-seryl-[protein] + H2O = L-seryl-[protein] + phosphate. It carries out the reaction O-phospho-L-threonyl-[protein] + H2O = L-threonyl-[protein] + phosphate. Its function is as follows. Acts as a suppressor of the SAPK signaling pathways by associating with and dephosphorylating MAP3K7/TAK1 and MAP3K5, and by attenuating the association between MAP3K7/TAK1 and MAP2K4 or MAP2K6. This chain is Protein phosphatase 1L (PPM1L), found in Bos taurus (Bovine).